A 277-amino-acid chain; its full sequence is Insertion element IS407 uncharacterized 31.7 kDa protein (277 aa).

In terms of domain architecture, Integrase catalytic spans 103 to 264 (LPGAPNEVWS…APSEFAAKHR (162 aa)).

In Burkholderia multivorans (strain ATCC 17616 / 249), this protein is Insertion element IS407 uncharacterized 31.7 kDa protein.